A 159-amino-acid chain; its full sequence is IQ domain-containing protein J (159 aa).

One can recognise an IQ domain in the interval 47–67 (ESKVKIIQRAWREYLQRQEPL). The tract at residues 63-88 (RQEPLGKRSPSPPSVSSEKLSSSVSM) is disordered. Residues 76–87 (SVSSEKLSSSVS) show a composition bias toward low complexity.

In Homo sapiens (Human), this protein is IQ domain-containing protein J.